Reading from the N-terminus, the 159-residue chain is Phosphopantetheine adenylyltransferase (159 aa).

T9 is a binding site for substrate. Residues 9–10 and H17 contribute to the ATP site; that span reads TF. Substrate is bound by residues K41, L73, and R87. Residues 88–90, E98, and 123–129 contribute to the ATP site; these read GLR and YSFISST.

This sequence belongs to the bacterial CoaD family. As to quaternary structure, homohexamer. Mg(2+) is required as a cofactor.

The protein localises to the cytoplasm. It carries out the reaction (R)-4'-phosphopantetheine + ATP + H(+) = 3'-dephospho-CoA + diphosphate. The protein operates within cofactor biosynthesis; coenzyme A biosynthesis; CoA from (R)-pantothenate: step 4/5. Functionally, reversibly transfers an adenylyl group from ATP to 4'-phosphopantetheine, yielding dephospho-CoA (dPCoA) and pyrophosphate. This Pseudomonas fluorescens (strain ATCC BAA-477 / NRRL B-23932 / Pf-5) protein is Phosphopantetheine adenylyltransferase.